Reading from the N-terminus, the 362-residue chain is Holliday junction branch migration complex subunit RuvB (362 aa).

The tract at residues 1-27 is disordered; the sequence is MANIEKTEFHVPAPVSAAGNQKSSLGN. Residues 13–206 form a large ATPase domain (RuvB-L) region; the sequence is APVSAAGNQK…FGFTAQMEFY (194 aa). ATP is bound by residues leucine 45, arginine 46, glycine 87, lysine 90, threonine 91, threonine 92, 153–155, arginine 196, tyrosine 206, and arginine 243; that span reads EDF. Threonine 91 is a Mg(2+) binding site. The small ATPAse domain (RuvB-S) stretch occupies residues 207–277; the sequence is EVEDLTKVVV…AAQAALVVFD (71 aa). Residues 280–362 are head domain (RuvB-H); that stretch reads EMGLDRLDRA…EPPEGIIGSL (83 aa). 2 residues coordinate DNA: arginine 335 and arginine 340.

This sequence belongs to the RuvB family. Homohexamer. Forms an RuvA(8)-RuvB(12)-Holliday junction (HJ) complex. HJ DNA is sandwiched between 2 RuvA tetramers; dsDNA enters through RuvA and exits via RuvB. An RuvB hexamer assembles on each DNA strand where it exits the tetramer. Each RuvB hexamer is contacted by two RuvA subunits (via domain III) on 2 adjacent RuvB subunits; this complex drives branch migration. In the full resolvosome a probable DNA-RuvA(4)-RuvB(12)-RuvC(2) complex forms which resolves the HJ.

It is found in the cytoplasm. It carries out the reaction ATP + H2O = ADP + phosphate + H(+). In terms of biological role, the RuvA-RuvB-RuvC complex processes Holliday junction (HJ) DNA during genetic recombination and DNA repair, while the RuvA-RuvB complex plays an important role in the rescue of blocked DNA replication forks via replication fork reversal (RFR). RuvA specifically binds to HJ cruciform DNA, conferring on it an open structure. The RuvB hexamer acts as an ATP-dependent pump, pulling dsDNA into and through the RuvAB complex. RuvB forms 2 homohexamers on either side of HJ DNA bound by 1 or 2 RuvA tetramers; 4 subunits per hexamer contact DNA at a time. Coordinated motions by a converter formed by DNA-disengaged RuvB subunits stimulates ATP hydrolysis and nucleotide exchange. Immobilization of the converter enables RuvB to convert the ATP-contained energy into a lever motion, pulling 2 nucleotides of DNA out of the RuvA tetramer per ATP hydrolyzed, thus driving DNA branch migration. The RuvB motors rotate together with the DNA substrate, which together with the progressing nucleotide cycle form the mechanistic basis for DNA recombination by continuous HJ branch migration. Branch migration allows RuvC to scan DNA until it finds its consensus sequence, where it cleaves and resolves cruciform DNA. This chain is Holliday junction branch migration complex subunit RuvB, found in Corynebacterium diphtheriae (strain ATCC 700971 / NCTC 13129 / Biotype gravis).